The chain runs to 139 residues: Nucleoside diphosphate kinase (139 aa).

Residues Lys11, Phe59, Arg87, Thr93, Arg104, and Asn114 each contribute to the ATP site. The Pros-phosphohistidine intermediate role is filled by His117.

The protein belongs to the NDK family. As to quaternary structure, homotetramer. Mg(2+) is required as a cofactor.

It localises to the cytoplasm. It catalyses the reaction a 2'-deoxyribonucleoside 5'-diphosphate + ATP = a 2'-deoxyribonucleoside 5'-triphosphate + ADP. The catalysed reaction is a ribonucleoside 5'-diphosphate + ATP = a ribonucleoside 5'-triphosphate + ADP. Its function is as follows. Major role in the synthesis of nucleoside triphosphates other than ATP. The ATP gamma phosphate is transferred to the NDP beta phosphate via a ping-pong mechanism, using a phosphorylated active-site intermediate. The chain is Nucleoside diphosphate kinase from Pasteurella multocida (strain Pm70).